We begin with the raw amino-acid sequence, 97 residues long: Alpha-latrotoxin associated low molecular weight protein 2 (97 aa).

An N-terminal signal peptide occupies residues 1-19; sequence MFKLICIVFIATILSITSA. Intrachain disulfides connect Cys-36/Cys-72, Cys-52/Cys-68, and Cys-55/Cys-81.

The protein belongs to the arthropod CHH/MIH/GIH/VIH hormone family. Expressed by the venom gland.

Its subcellular location is the secreted. In terms of biological role, may increase the toxicity of alpha-latrotoxin and/or other venom components. Is non-toxic to mice and to the cockroach Periplaneta americana. The polypeptide is Alpha-latrotoxin associated low molecular weight protein 2 (Steatoda grossa (False black widow)).